A 377-amino-acid polypeptide reads, in one-letter code: Guanine nucleotide-binding protein subunit alpha-13 (377 aa).

S-palmitoyl cysteine attachment occurs at residues Cys14 and Cys18. A G-alpha domain is found at 47–377 (RLVKILLLGA…HDNLKQLMLQ (331 aa)). The tract at residues 50 to 63 (KILLLGAGESGKST) is G1 motif. Residues 58–63 (ESGKST), Ser173, and 197–200 (LLAR) contribute to the GTP site. Ser62 lines the Mg(2+) pocket. A G2 motif region spans residues 195–203 (DILLARRPT). Thr203 provides a ligand contact to Mg(2+). A Phosphothreonine; by PKA modification is found at Thr203. Positions 218 to 227 (FKMVDVGGQR) are G3 motif. Residues 287 to 294 (ILFLNKTD) are G4 motif. Residues 291–294 (NKTD) and Ala349 each bind GTP. Residues 347 to 352 (TTAINT) form a G5 motif region.

It belongs to the G-alpha family. G(12) subfamily. As to quaternary structure, g proteins are composed of 3 units; alpha, beta and gamma. The alpha chain contains the guanine nucleotide binding site. Interacts with UBXD5. Interacts with HAX1. Interacts (in GTP-bound form) with PPP5C (via TPR repeats); activates PPP5C phosphatase activity and translocates PPP5C to the cell membrane. Interacts with RGS22. Interacts (in GTP-bound form) with ARHGEF1. Interacts (in GTP-bound form) with ARHGEF11 (via RGS domain). Interacts (in GTP-bound form) with ARHGEF12 (via RGS domain). Interacts with CTNND1. Interacts with GASL2L2. Interacts with GPR35. Interacts with GPR174. Palmitoylation is critical for proper membrane localization and signaling. Post-translationally, phosphorylation on Thr-203 by PKA destabilizes the heterotrimer of alpha, beta and gamma, and inhibits Rho activation. In terms of tissue distribution, expressed in testis, including in Leydig cells and in the seminiferous epithelium, in differentiating cells from the spermatogonia to mature spermatozoa stages and round spermatids (at protein level). Expressed in 99.2% of spermatozoa from healthy individuals, but only in 28.6% of macrocephalic spermatozoa from infertile patients (at protein level).

The protein localises to the cell membrane. The protein resides in the melanosome. It localises to the cytoplasm. It is found in the nucleus. Functionally, guanine nucleotide-binding proteins (G proteins) are involved as modulators or transducers in various transmembrane signaling systems. Activates effector molecule RhoA by binding and activating RhoGEFs (ARHGEF1/p115RhoGEF, ARHGEF11/PDZ-RhoGEF and ARHGEF12/LARG). GNA13-dependent Rho signaling subsequently regulates transcription factor AP-1 (activating protein-1). Promotes tumor cell invasion and metastasis by activating RhoA/ROCK signaling pathway. Inhibits CDH1-mediated cell adhesion in a process independent from Rho activation. In lymphoid follicles, transmits P2RY8- and S1PR2-dependent signals that lead to inhibition of germinal center (GC) B cell growth and migration outside the GC niche. The chain is Guanine nucleotide-binding protein subunit alpha-13 (GNA13) from Homo sapiens (Human).